A 297-amino-acid chain; its full sequence is tRNA pseudouridine synthase A (297 aa).

The active-site Nucleophile is D72. Y144 is a substrate binding site.

This sequence belongs to the tRNA pseudouridine synthase TruA family. In terms of assembly, homodimer.

The catalysed reaction is uridine(38/39/40) in tRNA = pseudouridine(38/39/40) in tRNA. In terms of biological role, formation of pseudouridine at positions 38, 39 and 40 in the anticodon stem and loop of transfer RNAs. In Mycobacterium bovis (strain ATCC BAA-935 / AF2122/97), this protein is tRNA pseudouridine synthase A.